Reading from the N-terminus, the 460-residue chain is Cysteine--tRNA ligase (460 aa).

Residue Cys28 participates in Zn(2+) binding. Residues 30–40 carry the 'HIGH' region motif; that stretch reads MTVYDYCHLGH. Residues Cys209, His234, and Glu238 each coordinate Zn(2+). The 'KMSKS' region motif lies at 266 to 270; sequence KMSKS. ATP is bound at residue Lys269.

The protein belongs to the class-I aminoacyl-tRNA synthetase family. Monomer. Zn(2+) serves as cofactor.

Its subcellular location is the cytoplasm. The enzyme catalyses tRNA(Cys) + L-cysteine + ATP = L-cysteinyl-tRNA(Cys) + AMP + diphosphate. The protein is Cysteine--tRNA ligase of Pseudomonas putida (strain ATCC 47054 / DSM 6125 / CFBP 8728 / NCIMB 11950 / KT2440).